The following is a 309-amino-acid chain: Protein FdhE (309 aa).

It belongs to the FdhE family.

Its subcellular location is the cytoplasm. In terms of biological role, necessary for formate dehydrogenase activity. In Escherichia coli O9:H4 (strain HS), this protein is Protein FdhE.